We begin with the raw amino-acid sequence, 665 residues long: ELMO family protein LMO1 (665 aa).

Forms an active heterodimer with DCK1.

The protein localises to the cytoplasm. It localises to the mitochondrion. Its function is as follows. Forms a transiant heterodimeric complex with DCK1, that acts as a guanine nucleotide exchange factor (GEF) for the small GTPase RHO5. DCK1, LMO1 and RHO5 relocate to mitochondria upon oxidative stress and trigger cell death. The DCK1/LMO1/RHO5 signaling module mediates mitochondrial turnover under nitrogen starvation conditions via mitophagy. The DCK1/LMO1/RHO5 signaling module also plays a role in cell wall integrity signaling. This is ELMO family protein LMO1 from Saccharomyces cerevisiae (strain ATCC 204508 / S288c) (Baker's yeast).